A 289-amino-acid polypeptide reads, in one-letter code: Proteasome subunit beta (289 aa).

The propeptide at Met-1–Gly-59 is removed in mature form; by autocatalysis. The Nucleophile role is filled by Thr-60.

The protein belongs to the peptidase T1B family. In terms of assembly, the 20S proteasome core is composed of 14 alpha and 14 beta subunits that assemble into four stacked heptameric rings, resulting in a barrel-shaped structure. The two inner rings, each composed of seven catalytic beta subunits, are sandwiched by two outer rings, each composed of seven alpha subunits. The catalytic chamber with the active sites is on the inside of the barrel. Has a gated structure, the ends of the cylinder being occluded by the N-termini of the alpha-subunits. Is capped by the proteasome-associated ATPase, ARC.

The protein resides in the cytoplasm. The catalysed reaction is Cleavage of peptide bonds with very broad specificity.. It participates in protein degradation; proteasomal Pup-dependent pathway. The formation of the proteasomal ATPase ARC-20S proteasome complex, likely via the docking of the C-termini of ARC into the intersubunit pockets in the alpha-rings, may trigger opening of the gate for substrate entry. Interconversion between the open-gate and close-gate conformations leads to a dynamic regulation of the 20S proteasome proteolysis activity. Component of the proteasome core, a large protease complex with broad specificity involved in protein degradation. This Saccharomonospora viridis (strain ATCC 15386 / DSM 43017 / JCM 3036 / CCUG 5913 / NBRC 12207 / NCIMB 9602 / P101) (Thermoactinomyces viridis) protein is Proteasome subunit beta.